A 165-amino-acid chain; its full sequence is Ribosome maturation factor RimM (165 aa).

A PRC barrel domain is found at glutamate 89–tryptophan 161.

This sequence belongs to the RimM family. As to quaternary structure, binds ribosomal protein uS19.

Its subcellular location is the cytoplasm. An accessory protein needed during the final step in the assembly of 30S ribosomal subunit, possibly for assembly of the head region. Essential for efficient processing of 16S rRNA. May be needed both before and after RbfA during the maturation of 16S rRNA. It has affinity for free ribosomal 30S subunits but not for 70S ribosomes. In Clostridium botulinum (strain Eklund 17B / Type B), this protein is Ribosome maturation factor RimM.